A 741-amino-acid chain; its full sequence is NAD(P)H-quinone oxidoreductase subunit 5, chloroplastic (741 aa).

16 helical membrane-spanning segments follow: residues Trp-9 to Phe-29, Trp-40 to Ile-60, Ile-89 to Ile-109, Phe-125 to Ile-145, Ile-147 to Thr-167, Gly-185 to Phe-205, Asn-219 to Ala-239, Thr-258 to Ala-278, Phe-284 to Phe-304, Leu-327 to Ile-347, Ala-354 to Cys-374, Asn-396 to Ser-416, Trp-425 to Tyr-445, Leu-549 to Phe-569, Val-605 to Val-625, and Tyr-721 to Leu-741.

This sequence belongs to the complex I subunit 5 family. As to quaternary structure, NDH is composed of at least 16 different subunits, 5 of which are encoded in the nucleus.

The protein localises to the plastid. It localises to the chloroplast thylakoid membrane. It carries out the reaction a plastoquinone + NADH + (n+1) H(+)(in) = a plastoquinol + NAD(+) + n H(+)(out). The enzyme catalyses a plastoquinone + NADPH + (n+1) H(+)(in) = a plastoquinol + NADP(+) + n H(+)(out). In terms of biological role, NDH shuttles electrons from NAD(P)H:plastoquinone, via FMN and iron-sulfur (Fe-S) centers, to quinones in the photosynthetic chain and possibly in a chloroplast respiratory chain. The immediate electron acceptor for the enzyme in this species is believed to be plastoquinone. Couples the redox reaction to proton translocation, and thus conserves the redox energy in a proton gradient. The chain is NAD(P)H-quinone oxidoreductase subunit 5, chloroplastic (ndhF) from Guizotia abyssinica (Niger).